The following is a 1068-amino-acid chain: Carbamoyl phosphate synthase large chain (1068 aa).

Positions 1-401 are carboxyphosphate synthetic domain; the sequence is MPLNKDIKKV…AFLKGIRSLE (401 aa). Arg129, Arg169, Gly175, Gly176, Lys208, Val210, Glu215, Gly241, Ile242, His243, Gln284, and Glu298 together coordinate ATP. Residues 133–327 form the ATP-grasp 1 domain; the sequence is RNVMSRINEP…IAKVAAKIAL (195 aa). Mg(2+) is bound by residues Gln284, Glu298, and Asn300. The Mn(2+) site is built by Gln284, Glu298, and Asn300. Residues 402–549 are oligomerization domain; sequence IGKYSLEHKK…YSTYDVYDEV (148 aa). The tract at residues 550-932 is carbamoyl phosphate synthetic domain; that stretch reads EVSKNKKVIV…ALYKGFIGAN (383 aa). One can recognise an ATP-grasp 2 domain in the interval 674–864; sequence DELLEKLQIS…IVDIATRVML (191 aa). The ATP site is built by Arg710, Lys749, Leu751, Glu755, Gly780, Val781, His782, Ser783, Gln823, and Glu835. Mg(2+)-binding residues include Gln823, Glu835, and Asn837. Mn(2+)-binding residues include Gln823, Glu835, and Asn837. The MGS-like domain maps to 933-1068; it reads MSIKKEKGTI…ETLHIFDLSN (136 aa). The allosteric domain stretch occupies residues 933–1068; it reads MSIKKEKGTI…ETLHIFDLSN (136 aa).

This sequence belongs to the CarB family. As to quaternary structure, composed of two chains; the small (or glutamine) chain promotes the hydrolysis of glutamine to ammonia, which is used by the large (or ammonia) chain to synthesize carbamoyl phosphate. Tetramer of heterodimers (alpha,beta)4. The cofactor is Mg(2+). Mn(2+) is required as a cofactor.

The enzyme catalyses hydrogencarbonate + L-glutamine + 2 ATP + H2O = carbamoyl phosphate + L-glutamate + 2 ADP + phosphate + 2 H(+). It carries out the reaction hydrogencarbonate + NH4(+) + 2 ATP = carbamoyl phosphate + 2 ADP + phosphate + 2 H(+). It functions in the pathway amino-acid biosynthesis; L-arginine biosynthesis; carbamoyl phosphate from bicarbonate: step 1/1. The protein operates within pyrimidine metabolism; UMP biosynthesis via de novo pathway; (S)-dihydroorotate from bicarbonate: step 1/3. Its function is as follows. Large subunit of the glutamine-dependent carbamoyl phosphate synthetase (CPSase). CPSase catalyzes the formation of carbamoyl phosphate from the ammonia moiety of glutamine, carbonate, and phosphate donated by ATP, constituting the first step of 2 biosynthetic pathways, one leading to arginine and/or urea and the other to pyrimidine nucleotides. The large subunit (synthetase) binds the substrates ammonia (free or transferred from glutamine from the small subunit), hydrogencarbonate and ATP and carries out an ATP-coupled ligase reaction, activating hydrogencarbonate by forming carboxy phosphate which reacts with ammonia to form carbamoyl phosphate. This is Carbamoyl phosphate synthase large chain from Clostridium botulinum (strain Loch Maree / Type A3).